Reading from the N-terminus, the 96-residue chain is Co-chaperonin GroES (96 aa).

This sequence belongs to the GroES chaperonin family. Heptamer of 7 subunits arranged in a ring. Interacts with the chaperonin GroEL.

The protein resides in the cytoplasm. Together with the chaperonin GroEL, plays an essential role in assisting protein folding. The GroEL-GroES system forms a nano-cage that allows encapsulation of the non-native substrate proteins and provides a physical environment optimized to promote and accelerate protein folding. GroES binds to the apical surface of the GroEL ring, thereby capping the opening of the GroEL channel. This chain is Co-chaperonin GroES, found in Halorhodospira halophila (strain DSM 244 / SL1) (Ectothiorhodospira halophila (strain DSM 244 / SL1)).